Reading from the N-terminus, the 535-residue chain is MANLDLSKYGITGVTEIVHNPSYDVLFAEETKPGLEGFEKGQVTNMGAVNVMTGVYTGRSPKDKFFVKDETSENTVWWTSEEYKNDNKPVDAKCWAAVKDLATKELSNKRLFVVDAFCGANENSRLKLRFIMEVAWQAHFVTNMFIRPTAEELANFGEPDFVIMNASKAKVENYKELGLNSETAVVFNLTEKIQVILNTWYGGEMKKGMFSYMNYLLPLNGMASMHCSANTDKEGKSSAIFFGLSGTGKTTLSTDPKRLLIGDDEHGWDDEGVFNFEGGCYAKVINLDKESEPDIWNAIKRDALLENCTVNAEGEINFADKSVTENTRVSYPIYHIENIVKPVSKGPHAKQVIFLSADAFGVLPPVSILNAEQTKYYFLSGFTAKLAGTERGITEPTPTFSACFGAAFLSLHPTKYGEELVKKMEKTGAKAYLVNTGWNGTGKRISIKDTRGIIDAILDGSIDKAPTKVMPYFDFVVPTELPGVDPKILDPRDTYECACQWEEKAKDLAGRFIKNFAKFTGNEAGKALVAAGPKL.

Arg59, Tyr201, and Lys207 together coordinate substrate. Residues Lys207, His226, and 243 to 251 (GLSGTGKTT) each bind ATP. The Mn(2+) site is built by Lys207 and His226. Asp264 is a binding site for Mn(2+). Residues Glu292, Arg328, 444–445 (RI), and Thr450 each bind ATP. Substrate is bound at residue Arg328.

It belongs to the phosphoenolpyruvate carboxykinase (ATP) family. Requires Mn(2+) as cofactor.

It is found in the cytoplasm. The catalysed reaction is oxaloacetate + ATP = phosphoenolpyruvate + ADP + CO2. Its pathway is carbohydrate biosynthesis; gluconeogenesis. Functionally, involved in the gluconeogenesis. Catalyzes the conversion of oxaloacetate (OAA) to phosphoenolpyruvate (PEP) through direct phosphoryl transfer between the nucleoside triphosphate and OAA. The polypeptide is Phosphoenolpyruvate carboxykinase (ATP) (Bacteroides thetaiotaomicron (strain ATCC 29148 / DSM 2079 / JCM 5827 / CCUG 10774 / NCTC 10582 / VPI-5482 / E50)).